A 336-amino-acid polypeptide reads, in one-letter code: Dihydroorotate dehydrogenase (quinone) (336 aa).

Residues 62–66 (AGLDK) and T86 each bind FMN. K66 is a substrate binding site. 111–115 (NRMGF) contacts substrate. FMN contacts are provided by N139 and N172. N172 provides a ligand contact to substrate. Catalysis depends on S175, which acts as the Nucleophile. Substrate is bound at residue N177. K217 and T245 together coordinate FMN. 246–247 (NT) provides a ligand contact to substrate. Residues G268, G297, and 318-319 (YS) contribute to the FMN site.

This sequence belongs to the dihydroorotate dehydrogenase family. Type 2 subfamily. Monomer. The cofactor is FMN.

Its subcellular location is the cell membrane. It catalyses the reaction (S)-dihydroorotate + a quinone = orotate + a quinol. It functions in the pathway pyrimidine metabolism; UMP biosynthesis via de novo pathway; orotate from (S)-dihydroorotate (quinone route): step 1/1. Its function is as follows. Catalyzes the conversion of dihydroorotate to orotate with quinone as electron acceptor. This chain is Dihydroorotate dehydrogenase (quinone), found in Escherichia fergusonii (strain ATCC 35469 / DSM 13698 / CCUG 18766 / IAM 14443 / JCM 21226 / LMG 7866 / NBRC 102419 / NCTC 12128 / CDC 0568-73).